A 409-amino-acid chain; its full sequence is All trans-polyprenyl-diphosphate synthase PDSS1 (409 aa).

Residues Lys-128, Arg-131, and His-167 each contribute to the isopentenyl diphosphate site. The Mg(2+) site is built by Asp-174 and Asp-178. Arg-184 is a binding site for isopentenyl diphosphate.

The protein belongs to the FPP/GGPP synthase family. Heterotetramer composed of 2 PDSS1/DPS1 and 2 PDSS2/DLP1 subunits. Requires Mg(2+) as cofactor.

The protein resides in the mitochondrion. It catalyses the reaction 7 isopentenyl diphosphate + (2E,6E)-farnesyl diphosphate = all-trans-decaprenyl diphosphate + 7 diphosphate. It carries out the reaction 6 isopentenyl diphosphate + (2E,6E)-farnesyl diphosphate = all-trans-nonaprenyl diphosphate + 6 diphosphate. It participates in cofactor biosynthesis; ubiquinone biosynthesis. Its function is as follows. Heterotetrameric enzyme that catalyzes the condensation of farnesyl diphosphate (FPP), which acts as a primer, and isopentenyl diphosphate (IPP) to produce prenyl diphosphates of varying chain lengths and participates in the determination of the side chain of ubiquinone. Supplies nona and decaprenyl diphosphate, the precursors for the side chain of the isoprenoid quinones ubiquinone-9 (Q9)and ubiquinone-10 (Q10) respectively. The enzyme adds isopentenyl diphosphate molecules sequentially to farnesyl diphosphate with trans stereochemistry. This Mus musculus (Mouse) protein is All trans-polyprenyl-diphosphate synthase PDSS1.